Reading from the N-terminus, the 147-residue chain is UPAR/Ly6 domain-containing protein CG9338 (147 aa).

Positions 1-23 (MVSSVKMILALTVLATVACTGYA) are cleaved as a signal peptide. Topologically, residues 24–126 (IKCYQCDSLT…VCTEDECNGT (103 aa)) are extracellular. Intrachain disulfides connect Cys-26–Cys-72, Cys-29–Cys-37, Cys-51–Cys-89, Cys-101–Cys-115, and Cys-118–Cys-123. Residue Asn-68 is glycosylated (N-linked (GlcNAc...) asparagine). Asn-124 carries GPI-anchor amidated asparagine lipidation. Positions 125 to 147 (GTSSLAPIAGVILLFFGLARLLA) are cleaved as a propeptide — removed in mature form. The chain crosses the membrane as a helical span at residues 127-147 (SSLAPIAGVILLFFGLARLLA).

This sequence belongs to the quiver family.

The protein resides in the cell membrane. Functionally, may be involved in regulating neuron excitability. The sequence is that of UPAR/Ly6 domain-containing protein CG9338 from Drosophila melanogaster (Fruit fly).